The sequence spans 624 residues: MESTFHSDTLDSFPNYQENSLNTNEEQTNPLESLRDGWASSNSSSSSSLLLPDENEGNEVFGSLKGLVTQSKFGQWANKLSKSLQARRRKSESISKPRVYYSVFMAPSWVLHAEKHWEEYPHYAGYDYKDYVRLLDATKEAIAHGVFPVLISKGSSGSYFVKNKVQKNIAVFKPKDEEPYGKLNPKWTKWFHRNLFPCFFGRSCLIPNTSYLSEAAACVLDRGLGLYLVPYTSVASISSPTFNYDYFARKAFLTRNKPLPEKTGSFQQFLDGFVVASKFFAQHPWPGTRHRETREYTESVASSEDFDIFDPFLAENEIETEFWTEELRLKFRFEFEKLVLLDYLMRNTDRNLDNWMIKICYEPCDNEEYYKSINLLSTNLTPNMSANSVDPAISQTSDFWKGPHFQIGAIDNSLAFPYKHPDSWRSFPYGWLSLPRSLFTQPFTEFTRQLFLHKLTSREWWEKLSDDLRNVFNQDLDFDEKMFSRQLSLVKGQAYNIVEVLKNPLMNIYDLLELPNLYVVEDVVRIEVNEPTSANSEEAEFGLPIKRDYGSILHPSCSQTFPPYPGSQLLQATPGRSFSSNAEALLPLNYITLLSKDSSSPKMLKDVIFERLQCASSNAVFSTC.

Over residues methionine 1–leucine 31 the composition is skewed to polar residues. The segment at methionine 1 to aspartate 53 is disordered. The segment covering serine 40–leucine 51 has biased composition (low complexity). The PI3K/PI4K catalytic domain occupies glycine 145–valine 520. The G-loop stretch occupies residues isoleucine 151 to glycine 157. The segment at arginine 346–asparagine 354 is catalytic loop. Positions alanine 409–tyrosine 429 are activation loop.

This sequence belongs to the PI3/PI4-kinase family. It depends on Mg(2+) as a cofactor. Mn(2+) is required as a cofactor.

Its subcellular location is the cell membrane. It localises to the vacuole membrane. The protein resides in the golgi apparatus membrane. The catalysed reaction is a 1,2-diacyl-sn-glycero-3-phospho-(1D-myo-inositol) + ATP = a 1,2-diacyl-sn-glycero-3-phospho-(1D-myo-inositol 4-phosphate) + ADP + H(+). May play a role in endocytic and/or exocytic pathways. The chain is Phosphatidylinositol 4-kinase lsb6 (lsb6) from Schizosaccharomyces pombe (strain 972 / ATCC 24843) (Fission yeast).